A 161-amino-acid polypeptide reads, in one-letter code: Large ribosomal subunit protein uL15 (161 aa).

Over residues 1-13 the composition is skewed to basic and acidic residues; it reads MKLNELRDNEGAA. Residues 1 to 51 form a disordered region; sequence MKLNELRDNEGAARKKKRVARGPGSGKGKTAGRGIKGQKSRSGVALNGYEG. The span at 23 to 35 shows a compositional bias: gly residues; it reads PGSGKGKTAGRGI.

This sequence belongs to the universal ribosomal protein uL15 family. As to quaternary structure, part of the 50S ribosomal subunit.

In terms of biological role, binds to the 23S rRNA. The polypeptide is Large ribosomal subunit protein uL15 (Cereibacter sphaeroides (strain ATCC 17023 / DSM 158 / JCM 6121 / CCUG 31486 / LMG 2827 / NBRC 12203 / NCIMB 8253 / ATH 2.4.1.) (Rhodobacter sphaeroides)).